The sequence spans 44 residues: DNA-directed RNA polymerase subunit Rpo12 (44 aa).

Zn(2+)-binding residues include cysteine 8, cysteine 22, and cysteine 25.

This sequence belongs to the archaeal Rpo12/eukaryotic RPC10 RNA polymerase subunit family. In terms of assembly, part of the RNA polymerase complex. Zn(2+) serves as cofactor.

The protein localises to the cytoplasm. The catalysed reaction is RNA(n) + a ribonucleoside 5'-triphosphate = RNA(n+1) + diphosphate. Functionally, DNA-dependent RNA polymerase (RNAP) catalyzes the transcription of DNA into RNA using the four ribonucleoside triphosphates as substrates. The protein is DNA-directed RNA polymerase subunit Rpo12 of Halobacterium salinarum (strain ATCC 29341 / DSM 671 / R1).